We begin with the raw amino-acid sequence, 346 residues long: Phosphoribosylformylglycinamidine cyclo-ligase (346 aa).

The protein belongs to the AIR synthase family.

It localises to the cytoplasm. It carries out the reaction 2-formamido-N(1)-(5-O-phospho-beta-D-ribosyl)acetamidine + ATP = 5-amino-1-(5-phospho-beta-D-ribosyl)imidazole + ADP + phosphate + H(+). It functions in the pathway purine metabolism; IMP biosynthesis via de novo pathway; 5-amino-1-(5-phospho-D-ribosyl)imidazole from N(2)-formyl-N(1)-(5-phospho-D-ribosyl)glycinamide: step 2/2. This is Phosphoribosylformylglycinamidine cyclo-ligase from Prochlorococcus marinus (strain NATL2A).